Reading from the N-terminus, the 274-residue chain is Large ribosomal subunit protein uL2cz/uL2cy (274 aa).

2 disordered regions span residues 1-21 and 225-274; these read MAIH…VDSQ and PVDH…RRSK.

The protein belongs to the universal ribosomal protein uL2 family. As to quaternary structure, part of the 50S ribosomal subunit.

The protein resides in the plastid. It localises to the chloroplast. The protein is Large ribosomal subunit protein uL2cz/uL2cy (rpl2-A) of Arabidopsis thaliana (Mouse-ear cress).